Consider the following 248-residue polypeptide: 14-3-3-like protein G-BOX factor 14 kappa (248 aa).

Phosphoserine is present on residues S70, S112, and S193. T214 is subject to Phosphothreonine.

Belongs to the 14-3-3 family. As to quaternary structure, interacts with the isocitrate dehydrogenase IDH3, and malate dehydrogenases MDH1 and MDH2. Interacts with CINV1.

It is found in the nucleus. Its subcellular location is the cytoplasm. Functionally, is associated with a DNA binding complex that binds to the G box, a well-characterized cis-acting DNA regulatory element found in plant genes. Involved in the regulation of nutrient metabolism. Negative regulator of freezing tolerance that modulates cold-responsive C-repeat-binding factors (CBF) DREB1A AND DREB1B proteins stability by facilitating their ubiquitin-mediated degradation; this processus is counteracted by B1L. The protein is 14-3-3-like protein G-BOX factor 14 kappa of Arabidopsis thaliana (Mouse-ear cress).